The sequence spans 365 residues: UDP-N-acetylglucosamine--N-acetylmuramyl-(pentapeptide) pyrophosphoryl-undecaprenol N-acetylglucosamine transferase (365 aa).

Residues 12 to 14, asparagine 123, arginine 166, serine 194, and glutamine 295 each bind UDP-N-acetyl-alpha-D-glucosamine; that span reads TGG.

Belongs to the glycosyltransferase 28 family. MurG subfamily.

It is found in the cell inner membrane. It carries out the reaction di-trans,octa-cis-undecaprenyl diphospho-N-acetyl-alpha-D-muramoyl-L-alanyl-D-glutamyl-meso-2,6-diaminopimeloyl-D-alanyl-D-alanine + UDP-N-acetyl-alpha-D-glucosamine = di-trans,octa-cis-undecaprenyl diphospho-[N-acetyl-alpha-D-glucosaminyl-(1-&gt;4)]-N-acetyl-alpha-D-muramoyl-L-alanyl-D-glutamyl-meso-2,6-diaminopimeloyl-D-alanyl-D-alanine + UDP + H(+). It participates in cell wall biogenesis; peptidoglycan biosynthesis. Its function is as follows. Cell wall formation. Catalyzes the transfer of a GlcNAc subunit on undecaprenyl-pyrophosphoryl-MurNAc-pentapeptide (lipid intermediate I) to form undecaprenyl-pyrophosphoryl-MurNAc-(pentapeptide)GlcNAc (lipid intermediate II). The protein is UDP-N-acetylglucosamine--N-acetylmuramyl-(pentapeptide) pyrophosphoryl-undecaprenol N-acetylglucosamine transferase of Phenylobacterium zucineum (strain HLK1).